Consider the following 245-residue polypeptide: 1-(5-phosphoribosyl)-5-[(5-phosphoribosylamino)methylideneamino] imidazole-4-carboxamide isomerase (245 aa).

D8 serves as the catalytic Proton acceptor. Residue D130 is the Proton donor of the active site.

Belongs to the HisA/HisF family.

It is found in the cytoplasm. The enzyme catalyses 1-(5-phospho-beta-D-ribosyl)-5-[(5-phospho-beta-D-ribosylamino)methylideneamino]imidazole-4-carboxamide = 5-[(5-phospho-1-deoxy-D-ribulos-1-ylimino)methylamino]-1-(5-phospho-beta-D-ribosyl)imidazole-4-carboxamide. It functions in the pathway amino-acid biosynthesis; L-histidine biosynthesis; L-histidine from 5-phospho-alpha-D-ribose 1-diphosphate: step 4/9. This Pseudomonas putida (strain W619) protein is 1-(5-phosphoribosyl)-5-[(5-phosphoribosylamino)methylideneamino] imidazole-4-carboxamide isomerase.